Consider the following 314-residue polypeptide: Lysophospholipase D GDPD1 (314 aa).

The Extracellular portion of the chain corresponds to 1 to 3; that stretch reads MSS. A helical membrane pass occupies residues 4-24; the sequence is TAAFCLLSTLGGYLVTSFLLL. Residues 25-195 are Cytoplasmic-facing; sequence KYPALLHQRK…VDKCYKENSD (171 aa). Residues 40 to 309 form the GP-PDE domain; it reads SRHISHRGGA…DYPTKLKDFL (270 aa). A divalent metal cation contacts are provided by Glu72, Asp74, and His87. A helical transmembrane segment spans residues 196–216; that stretch reads IPILFSLQRVLLILGLFFTGL. The Extracellular segment spans residues 217–314; sequence LPFVPIREQF…LKDFLNNFSA (98 aa).

Belongs to the glycerophosphoryl diester phosphodiesterase family. In terms of tissue distribution, widely expressed.

The protein localises to the cytoplasm. It is found in the membrane. Its subcellular location is the perinuclear region. The protein resides in the endoplasmic reticulum. It catalyses the reaction 1-hexadecanoyl-sn-glycero-3-phosphocholine + H2O = 1-hexadecanoyl-sn-glycero-3-phosphate + choline + H(+). The catalysed reaction is 1-hexadecanoyl-sn-glycero-3-phosphoethanolamine + H2O = 1-hexadecanoyl-sn-glycero-3-phosphate + ethanolamine + H(+). The enzyme catalyses N-hexadecanoyl-sn-glycero-3-phosphoethanolamine + H2O = N-hexadecanoylethanolamine + sn-glycerol 3-phosphate + H(+). It carries out the reaction N-(5Z,8Z,11Z,14Z-eicosatetraenoyl)-1-(9Z-octadecenoyl)-sn-glycero-3-phosphoethanolamine + H2O = N-(5Z,8Z,11Z,14Z-eicosatetraenoyl)-ethanolamine + 1-(9Z-octadecenoyl)-sn-glycero-3-phosphate + H(+). It catalyses the reaction N,1-di-(9Z-octadecenoyl)-sn-glycero-3-phosphoethanolamine + H2O = N-(9Z-octadecenoyl) ethanolamine + 1-(9Z-octadecenoyl)-sn-glycero-3-phosphate + H(+). The catalysed reaction is N-hexadecanoyl-1-(9Z-octadecenoyl)-sn-glycero-3-phosphoethanolamine + H2O = N-hexadecanoylethanolamine + 1-(9Z-octadecenoyl)-sn-glycero-3-phosphate + H(+). The enzyme catalyses a 1-O-alkyl-sn-glycero-3-phosphocholine + H2O = a 1-O-alkyl-sn-glycero-3-phosphate + choline + H(+). It carries out the reaction 1-O-hexadecyl-sn-glycero-3-phosphocholine + H2O = 1-O-hexadecyl-sn-glycero-3-phosphate + choline + H(+). It catalyses the reaction 1-(9Z-octadecenoyl)-sn-glycero-3-phosphocholine + H2O = 1-(9Z-octadecenoyl)-sn-glycero-3-phosphate + choline + H(+). The catalysed reaction is N,1-dihexadecanoyl-sn-glycero-3-phosphoethanolamine + H2O = N-hexadecanoylethanolamine + 1-hexadecanoyl-sn-glycero-3-phosphate + H(+). The enzyme catalyses 1-O-(1Z-octadecenyl)-sn-glycero-3-phospho-(N-5Z,8Z,11Z,14Z-eicosatetraenoyl)-ethanolamine + H2O = 1-O-(1Z-octadecenyl)-sn-glycero-3-phosphate + N-(5Z,8Z,11Z,14Z-eicosatetraenoyl)-ethanolamine + H(+). It carries out the reaction 1-O-(1Z-octadecenyl)-sn-glycero-3-phospho-(N-9Z-octadecenoyl)-ethanolamine + H2O = 1-O-(1Z-octadecenyl)-sn-glycero-3-phosphate + N-(9Z-octadecenoyl) ethanolamine + H(+). It catalyses the reaction 1-O-(1Z-octadecenyl)-sn-glycero-3-phospho-N-hexadecanoyl-ethanolamine + H2O = 1-O-(1Z-octadecenyl)-sn-glycero-3-phosphate + N-hexadecanoylethanolamine + H(+). Lysophospholipase D activity is increased by magnesium and manganese and inhibited by calcium in a concentration dependent manner. Loss of lysophospholipase D activity by addition of EDTA. Hydrolyzes lysoglycerophospholipids to produce lysophosphatidic acid (LPA) and the corresponding amines. Shows a preference for 1-O-alkyl-sn-glycero-3-phosphocholine (lyso-PAF), lysophosphatidylethanolamine (lyso-PE) and lysophosphatidylcholine (lyso-PC). May be involved in bioactive N-acylethanolamine biosynthesis from both N-acyl-lysoplasmenylethanolamin (N-acyl-lysoPlsEt) and N-acyl-lysophosphatidylethanolamin (N-acyl-lysoPE). In addition, hydrolyzes glycerophospho-N-acylethanolamine to N-acylethanolamine. Does not display glycerophosphodiester phosphodiesterase activity, since it cannot hydrolyze either glycerophosphoinositol or glycerophosphocholine. The protein is Lysophospholipase D GDPD1 of Mus musculus (Mouse).